Here is a 166-residue protein sequence, read N- to C-terminus: Large ribosomal subunit protein uL10 (166 aa).

This sequence belongs to the universal ribosomal protein uL10 family. As to quaternary structure, part of the ribosomal stalk of the 50S ribosomal subunit. The N-terminus interacts with L11 and the large rRNA to form the base of the stalk. The C-terminus forms an elongated spine to which L12 dimers bind in a sequential fashion forming a multimeric L10(L12)X complex.

Forms part of the ribosomal stalk, playing a central role in the interaction of the ribosome with GTP-bound translation factors. In Tropheryma whipplei (strain TW08/27) (Whipple's bacillus), this protein is Large ribosomal subunit protein uL10.